The primary structure comprises 594 residues: Spermidine/putrescine import ATP-binding protein PotA (594 aa).

In terms of domain architecture, ABC transporter spans 24-435 (IEIKKINKTY…PANNWVANFI (412 aa)). Position 57–64 (57–64 (GPSGCGKT)) interacts with ATP. The interval 125–304 (RKPIENVSAD…EWFDKKKLTR (180 aa)) is insert.

The protein belongs to the ABC transporter superfamily. Spermidine/putrescine importer (TC 3.A.1.11.1) family. The complex is composed of two ATP-binding proteins (PotA), two transmembrane proteins (PotB and PotC) and a solute-binding protein (PotD).

Its subcellular location is the cell membrane. It carries out the reaction ATP + H2O + polyamine-[polyamine-binding protein]Side 1 = ADP + phosphate + polyamineSide 2 + [polyamine-binding protein]Side 1.. Functionally, part of the ABC transporter complex PotABCD involved in spermidine/putrescine import. Responsible for energy coupling to the transport system. In Malacoplasma penetrans (strain HF-2) (Mycoplasma penetrans), this protein is Spermidine/putrescine import ATP-binding protein PotA.